The primary structure comprises 174 residues: Ribosome maturation factor RimM (174 aa).

The PRC barrel domain occupies 98 to 171; sequence EGEFYFHEII…KIEIELMEGL (74 aa).

This sequence belongs to the RimM family. Binds ribosomal protein uS19.

The protein resides in the cytoplasm. Its function is as follows. An accessory protein needed during the final step in the assembly of 30S ribosomal subunit, possibly for assembly of the head region. Essential for efficient processing of 16S rRNA. May be needed both before and after RbfA during the maturation of 16S rRNA. It has affinity for free ribosomal 30S subunits but not for 70S ribosomes. This chain is Ribosome maturation factor RimM, found in Bacillus subtilis (strain 168).